The sequence spans 380 residues: Glucose-1-phosphate adenylyltransferase (380 aa).

Alpha-D-glucose 1-phosphate-binding positions include glycine 164, 179 to 180 (EK), and serine 190.

The protein belongs to the bacterial/plant glucose-1-phosphate adenylyltransferase family. As to quaternary structure, homotetramer.

It carries out the reaction alpha-D-glucose 1-phosphate + ATP + H(+) = ADP-alpha-D-glucose + diphosphate. The protein operates within glycan biosynthesis; glycogen biosynthesis. Involved in the biosynthesis of ADP-glucose, a building block required for the elongation reactions to produce glycogen. Catalyzes the reaction between ATP and alpha-D-glucose 1-phosphate (G1P) to produce pyrophosphate and ADP-Glc. The protein is Glucose-1-phosphate adenylyltransferase of Lacticaseibacillus casei (strain BL23) (Lactobacillus casei).